Here is a 94-residue protein sequence, read N- to C-terminus: PqqA binding protein (94 aa).

This sequence belongs to the PqqD family. As to quaternary structure, monomer. Interacts with PqqE.

It functions in the pathway cofactor biosynthesis; pyrroloquinoline quinone biosynthesis. Functionally, functions as a PqqA binding protein and presents PqqA to PqqE, in the pyrroloquinoline quinone (PQQ) biosynthetic pathway. The chain is PqqA binding protein from Pseudomonas syringae pv. syringae (strain B728a).